The primary structure comprises 310 residues: Protease HtpX homolog (310 aa).

2 helical membrane-spanning segments follow: residues 16 to 36 (NAVL…VDVI) and 55 to 75 (IFPT…VVCI). His-166 is a Zn(2+) binding site. Glu-167 is an active-site residue. Residue His-170 participates in Zn(2+) binding. Helical transmembrane passes span 182–202 (VGIL…FFMG) and 214–234 (MILL…QMYL). Glu-239 is a binding site for Zn(2+).

This sequence belongs to the peptidase M48B family. The cofactor is Zn(2+).

The protein localises to the cell inner membrane. The chain is Protease HtpX homolog from Helicobacter pylori (strain Shi470).